We begin with the raw amino-acid sequence, 334 residues long: D-fructose 1,6-bisphosphatase class 2/sedoheptulose 1,7-bisphosphatase (334 aa).

Mn(2+) contacts are provided by Asp-33, Glu-57, Asp-85, and Glu-88. Substrate-binding positions include 88–90 (EGT), Tyr-119, 164–166 (RAR), and 186–188 (DGD). Position 213 (Glu-213) interacts with Mn(2+).

The protein belongs to the FBPase class 2 family. In terms of assembly, homotetramer. Requires Mn(2+) as cofactor.

The catalysed reaction is beta-D-fructose 1,6-bisphosphate + H2O = beta-D-fructose 6-phosphate + phosphate. It carries out the reaction D-sedoheptulose 1,7-bisphosphate + H2O = D-sedoheptulose 7-phosphate + phosphate. Its pathway is carbohydrate biosynthesis; Calvin cycle. Its function is as follows. Catalyzes the hydrolysis of fructose 1,6-bisphosphate (Fru 1,6-P2) and sedoheptulose 1,7-bisphosphate (Sed 1,7-P2) to fructose 6-phosphate and sedoheptulose 7-phosphate, respectively. The protein is D-fructose 1,6-bisphosphatase class 2/sedoheptulose 1,7-bisphosphatase of Prochlorococcus marinus (strain NATL1A).